The chain runs to 465 residues: Hepatocyte nuclear factor 6 (465 aa).

Disordered stretches follow at residues 15–84 (GVSH…GPLH) and 119–141 (SDKF…HQRL). Over residues 123–140 (PHHHHHHHHHHHPHHHQR) the composition is skewed to basic residues. A DNA-binding region (CUT) is located at residues 283–369 (GSNSGQMEEI…QRMSALRLAA (87 aa)). The homeobox DNA-binding region spans 385-444 (PKKPRLVFTDVQRRTLHAIFKENKRPSKELQITISQQLGLELSTVSNFFMNARRRSLDKW). Residues 442 to 465 (DKWQDEGSSNSGNSSSSSSTCTKA) form a disordered region. The segment covering 448 to 465 (GSSNSGNSSSSSSTCTKA) has biased composition (low complexity).

Belongs to the CUT homeobox family. Binds DNA as a monomer. As to expression, expressed in liver, brain, spleen and testis.

Its subcellular location is the nucleus. Functionally, transcriptional activator. Binds the consensus sequence 5'-DHWATTGAYTWWD-3' on a variety of gene promoters such as those of HNF3B and TTR. Important for liver genes transcription. The affinity of HNF-6-alpha and HNF-6-beta for DNA differs depending on the target sequence. The chain is Hepatocyte nuclear factor 6 (Onecut1) from Rattus norvegicus (Rat).